The sequence spans 690 residues: Elongation factor G (690 aa).

Positions E8–I283 constitute a tr-type G domain. Residues A17 to T24, D81 to H85, and N135 to D138 contribute to the GTP site.

The protein belongs to the TRAFAC class translation factor GTPase superfamily. Classic translation factor GTPase family. EF-G/EF-2 subfamily.

The protein resides in the cytoplasm. In terms of biological role, catalyzes the GTP-dependent ribosomal translocation step during translation elongation. During this step, the ribosome changes from the pre-translocational (PRE) to the post-translocational (POST) state as the newly formed A-site-bound peptidyl-tRNA and P-site-bound deacylated tRNA move to the P and E sites, respectively. Catalyzes the coordinated movement of the two tRNA molecules, the mRNA and conformational changes in the ribosome. The polypeptide is Elongation factor G (Rickettsia canadensis (strain McKiel)).